The primary structure comprises 437 residues: UPF0597 protein Shal_0864 (437 aa).

This sequence belongs to the UPF0597 family.

This is UPF0597 protein Shal_0864 from Shewanella halifaxensis (strain HAW-EB4).